A 519-amino-acid chain; its full sequence is Putative ATP-dependent RNA helicase L396 (519 aa).

In terms of domain architecture, Helicase ATP-binding spans Ile110 to Leu258. An ATP-binding site is contributed by Met123–Thr130. The short motif at Asp211–His214 is the DEAH box element. In terms of domain architecture, Helicase C-terminal spans Tyr317–Tyr457.

It belongs to the DEAD box helicase family. DEAH subfamily.

The enzyme catalyses ATP + H2O = ADP + phosphate + H(+). This chain is Putative ATP-dependent RNA helicase L396, found in Acanthamoeba polyphaga (Amoeba).